The sequence spans 684 residues: Nuclear transcription factor Y subunit gamma (684 aa).

Disordered regions lie at residues 1-74 (MENQ…NIST), 112-238 (MNSP…SSFQ), 414-487 (HSPQ…TQQL), and 511-650 (QQQQ…KNDE). The span at 21-49 (SNSHNNHHNNNNNNNYNNNNNNNINNINN) shows a compositional bias: low complexity. The span at 58–74 (KSIQQHSPHSSTPNIST) shows a compositional bias: polar residues. Residues 142–162 (HQHPSSASSSSSSSSSSLSSS) are compositionally biased toward low complexity. Basic residues predominate over residues 163 to 176 (SHHHHSNHHHHHPN). A compositionally biased stretch (polar residues) spans 188 to 203 (PSLNDSSSNGNGTPAL). Over residues 220 to 238 (TPTSTPNQRFQSNGSSSFQ) the composition is skewed to low complexity. Positions 414–423 (HSPQLQEQSS) are enriched in polar residues. The segment covering 424–437 (NNNNNNNNNNNNNN) has biased composition (low complexity). 2 stretches are compositionally biased toward polar residues: residues 438–456 (SVSVKRSYSMEIQNSSPLS) and 464–477 (SQDYNFQYNENNHN). Low complexity-rich tracts occupy residues 478 to 487 (QSSLSQTQQL), 511 to 522 (QQQQHSQQISQQ), and 529 to 637 (PSNS…NNNN).

It belongs to the NFYC/HAP5 subunit family. Heterotrimeric transcription factor composed of three components, NF-YA, NF-YB and NF-YC. NF-YB and NF-YC must interact and dimerize for NF-YA association and DNA binding.

The protein resides in the nucleus. In terms of biological role, stimulates the transcription of various genes by recognizing and binding to a CCAAT motif in promoters. This Dictyostelium discoideum (Social amoeba) protein is Nuclear transcription factor Y subunit gamma (nfyc-1).